The primary structure comprises 88 residues: UPF0237 protein spr0217 (88 aa).

One can recognise an ACT domain in the interval 4 to 77; sequence IITVVGKDKS…QTLNVKINIQ (74 aa).

This sequence belongs to the UPF0237 family. As to quaternary structure, homodimer.

The sequence is that of UPF0237 protein spr0217 from Streptococcus pneumoniae (strain ATCC BAA-255 / R6).